The sequence spans 353 residues: (3aS,4S,5R,7aS)-5-hydroxy-7a-methyl-1-oxo-octahydro-1H-indene-4-carboxyl-CoA dehydrogenase (353 aa).

FMN contacts are provided by residues 22–24 (GMG), 171–173 (AGG), and 194–195 (GT).

It belongs to the nitronate monooxygenase family.

The catalysed reaction is (3aS,4S,5R,7aS)-5-hydroxy-7a-methyl-1-oxo-octahydro-1H-indene-4-carboxyl-CoA + NAD(+) = (5R,7aS)-5-hydroxy-7a-methyl-1-oxo-2,3,5,6,7,7a-hexahydro-1H-indene-carboxyl-CoA + NADH + H(+). The protein operates within steroid metabolism; cholesterol degradation. Functionally, involved in the final steps of cholesterol and steroid degradation. Probably catalyzes the introduction of a double bound into the C ring of 5OH-HIC-CoA, leading to the formation of (5R,7aS)-5-hydroxy-7a-methyl-1-oxo-3,5,6,7-tetrahydro-2H-indene-4-carboxyl-CoA. This chain is (3aS,4S,5R,7aS)-5-hydroxy-7a-methyl-1-oxo-octahydro-1H-indene-4-carboxyl-CoA dehydrogenase, found in Rhodococcus jostii (strain RHA1).